The primary structure comprises 123 residues: Small ribosomal subunit protein uS12cz/uS12cy (123 aa).

This sequence belongs to the universal ribosomal protein uS12 family. In terms of assembly, part of the 30S ribosomal subunit.

The protein localises to the plastid. It is found in the chloroplast. In terms of biological role, with S4 and S5 plays an important role in translational accuracy. Located at the interface of the 30S and 50S subunits. In Nymphaea alba (White water-lily), this protein is Small ribosomal subunit protein uS12cz/uS12cy (rps12-A).